The primary structure comprises 413 residues: Coiled-coil domain-containing protein 83 (413 aa).

Coiled-coil stretches lie at residues 32–186 (HCQI…RIIR) and 215–255 (IWEN…QLFN).

The protein is Coiled-coil domain-containing protein 83 (CCDC83) of Bos taurus (Bovine).